A 93-amino-acid chain; its full sequence is Small ribosomal subunit protein uS19 (93 aa).

This sequence belongs to the universal ribosomal protein uS19 family.

In terms of biological role, protein S19 forms a complex with S13 that binds strongly to the 16S ribosomal RNA. The sequence is that of Small ribosomal subunit protein uS19 (rpsS) from Mycobacterium leprae (strain TN).